Consider the following 429-residue polypeptide: Prenyltransferase okaC (429 aa).

Arginine 101, lysine 189, tyrosine 191, lysine 257, tyrosine 259, tyrosine 342, tyrosine 406, and tyrosine 410 together coordinate dimethylallyl diphosphate.

The protein belongs to the tryptophan dimethylallyltransferase family.

The enzyme catalyses cyclo(L-Trp-L-Trp) + 2 dimethylallyl diphosphate = cyclo(N(8)-(alpha,alpha-dimethylallyl)-L-Trp-6a-(alpha,alpha-dimethylallyl)-L-Trp) + 2 diphosphate. The protein operates within alkaloid biosynthesis. Its function is as follows. Prenyltransferase; part of the gene cluster that mediates the biosynthesis of okaramine B, a prenylated indole alkaloid that possesses an unusual octacyclic ring system, including a four-membered azetidine ring and an eight-membered azocine ring, and that exhibits insecticidal activity against silkworm larvae. Within the pathway, okaC performs asymmetric reverse prenylation of cyclo(L-Trp-L-Trp) at N-1 and C-2' of the indole ring to produce the cyclic prenylated tryptophan dimer cyclo(N8-(alpha,alpha-dimethylallyl)-L-Trp-6a-(alpha,alpha-dime-thylallyl)-L-Trp). The biosynthesis begins with the NRPS okaA that condenses two tryptophan molecules into cyclo(L-Trp-L-Trp). Prenylation by the prenyltransferase okaC then leads to the formation of cyclo(N8-(alpha,alpha-dimethylallyl)-L-Trp-6a-(alpha,alpha-dime-thylallyl)-L-Trp). This is followed by indole 2,3-epoxidation by the FAD-dependent monooxygenase okaB to facilitate the formation of the hexahydropyrrolo[2,3-b]indole (HPI) moiety of okaramine C. The cytochrome P450 monooxygenase okaD then likely catalyzes formation of the eight-membered ring of okaramine A. The dioxygenase okaE further forms the unusual 2-dimethyl-3-methyl-azetidine ring to yield 12-deshydroxyl okaramine E, as well as the hydroxylation of 12-deshydroxyl okaramine E to produce okaramine E. The cytochrome P450 monoxygenase okaG converts 12-deshydroxyl okaramine E into 3-desmethyl okaramine B which is further methylated by the methyltransferase okaF into okaramine B. In a shunt pathway, okaG and okaF together are also able to convert okaramine E into okaramine D. Okaramine H is produced by nonenzymatic conversion from okaramine A. The chain is Prenyltransferase okaC from Penicillium ochrochloron.